The sequence spans 435 residues: MLDLKAVAADFESFERRLARRGEGAVQALAPVKPLAARRRELNVLLEKQKKEQADANARIRELARTDKGAVEGARASLRALGDEVKKTEAELGEVEAELTRLLMLVPNPPHDSVPDGKDEHDNVVVKTWGEQKAYGFTPKPHWEVGEALGVLEWQQAAKLSGSRFTILKGAAARLERAIVSFFIDVHTSRGYTEILPPYLVTGETMTGTGQLPKFEEDLFKTTNEPPMYLIPTAEVPVTNMHRDEIFEASAMPVSYCAFSPCFRAEAGSAGRDTRGIMRQHQFHKVELVKLSKAEESYAEHEKMLDDACEVLRRLGLHHRVSLLCTGDMGFSSAKTYDIEVWCPGQGAYREISSVSNCEDFQARRIRVRYRGENGKPRLAHTLNGSGVAVGRTIVAILEQCQEADGTVVIPEPLRPYMGGLERIAAETFPRGVER.

Residue 233 to 235 (TAE) coordinates L-serine. An ATP-binding site is contributed by 264-266 (RAE). Position 287 (E287) interacts with L-serine. An ATP-binding site is contributed by 351-354 (EISS). S386 contributes to the L-serine binding site.

This sequence belongs to the class-II aminoacyl-tRNA synthetase family. Type-1 seryl-tRNA synthetase subfamily. In terms of assembly, homodimer. The tRNA molecule binds across the dimer.

The protein localises to the cytoplasm. It catalyses the reaction tRNA(Ser) + L-serine + ATP = L-seryl-tRNA(Ser) + AMP + diphosphate + H(+). The enzyme catalyses tRNA(Sec) + L-serine + ATP = L-seryl-tRNA(Sec) + AMP + diphosphate + H(+). It participates in aminoacyl-tRNA biosynthesis; selenocysteinyl-tRNA(Sec) biosynthesis; L-seryl-tRNA(Sec) from L-serine and tRNA(Sec): step 1/1. Catalyzes the attachment of serine to tRNA(Ser). Is also able to aminoacylate tRNA(Sec) with serine, to form the misacylated tRNA L-seryl-tRNA(Sec), which will be further converted into selenocysteinyl-tRNA(Sec). This is Serine--tRNA ligase from Anaeromyxobacter dehalogenans (strain 2CP-C).